A 653-amino-acid polypeptide reads, in one-letter code: MGKKRGTGLGRSLQRQRGSERRGASSWLHASEVVGESGPERRSAVEQSPLEEFLATAELAGTRFVAERLNIQFVSAQSRTGLLTAQEAQHVRQLHEENRQFLRIPRRPYWDRTTSSEDLKQAERESFLEWRRQLAHLEEEKKLILTPFERNLEFWRQLWRVIERSDIVVQIVDARNPLLFRCQDLESYVKEVSNDKENMILINKADLLSEEQRAAWAQFFEKEGVKVVFWSALAECRRLSGEVKELDADSVADDLSDSEEESSSQEEDVTAEDSAESTSTGSALQTENQCLLSDDDSSDEYEDCEDEEEDDWQTCSEDEGGDKVNAIAPKSMENRTDIVSMHHVVQEQNRNVKNFSHLVQRNELLEIFKTLHSGPRVKDGEVNVGLVGYPNVGKSSTINTILGDKKVSVSATPGRTKHFQTLYVEPGLCLCDCPGLVMPSFVSTKAEMICSGILPIDQMRDHVPPISLVCQHIPRNILEATYGINIIRPREDEDPDRKPTAEELLTAYGYMRGFMTAHGQPDQPRSARYVLKDYVSGKLLYCHPPPGIDPDGFQHQHERCPESRTVQASGPVKPKKNTKAKQIENVVDKSFFHQENVRALMKGVRATMGYRPGSGLVSVPAPSAGSVVGKPWKKHGNRNKKEKVRRITKHLEN.

Residues Met-1–Gln-47 form a disordered region. Residues Trp-155–Pro-439 enclose the CP-type G domain. Asn-203–Asp-206 lines the GTP pocket. Residues Ala-248–Ala-275 show a composition bias toward acidic residues. Positions Ala-248–Lys-323 are disordered. Polar residues predominate over residues Glu-276–Leu-291. Residues Ser-293 to Gly-320 are compositionally biased toward acidic residues. GTP is bound by residues Gly-388–Ser-395 and Asp-432–Gly-435. Residues Ala-621–Asn-653 form a disordered region. Positions Pro-631–Asn-653 are enriched in basic residues.

This sequence belongs to the TRAFAC class YlqF/YawG GTPase family. LSG1 subfamily.

Its subcellular location is the cytoplasm. The protein resides in the endoplasmic reticulum. It localises to the nucleus. It is found in the cajal body. The catalysed reaction is GTP + H2O = GDP + phosphate + H(+). GTPase required for the XPO1/CRM1-mediated nuclear export of the 60S ribosomal subunit. Probably acts by mediating the release of NMD3 from the 60S ribosomal subunit after export into the cytoplasm. Functionally, functions as a GTPase. May act by mediating the release of NMD3 from the 60S ribosomal subunit after export into the cytoplasm during the 60S ribosomal subunit maturation. In Gallus gallus (Chicken), this protein is Large subunit GTPase 1 homolog.